Here is a 222-residue protein sequence, read N- to C-terminus: Voltage-dependent calcium channel gamma-1 subunit (222 aa).

Topologically, residues 1 to 10 (MSQTKMLKVR) are cytoplasmic. Residues 11–29 (VTLFCILAGIVLAMTAVVT) traverse the membrane as a helical segment. Residues 30 to 108 (DHWAVLSPHM…TQKEYSISAA (79 aa)) are Extracellular-facing. Asparagine 43 and asparagine 79 each carry an N-linked (GlcNAc...) asparagine glycan. Cysteines 57 and 80 form a disulfide. The helical transmembrane segment at 109-129 (AIAIFSLGFIILGSLCVLLSL) threads the bilayer. Over 130–134 (GKKRD) the chain is Cytoplasmic. A helical membrane pass occupies residues 135–155 (YLLRPASMFYAFAGLCILVSV). Topologically, residues 156–179 (EVMRQSVKRMIDSEDTVWIEYYYS) are extracellular. A helical transmembrane segment spans residues 180–204 (WSFACACAAFILLFLGGLALLLFSL). The Cytoplasmic segment spans residues 205-222 (PRMPRNPWESCMDAEPEH).

Belongs to the PMP-22/EMP/MP20 family. CACNG subfamily. In terms of assembly, component of a calcium channel complex consisting of a pore-forming alpha subunit (CACNA1S) and the ancillary subunits CACNB1 or CACNB2, CACNG1 and CACNA2D1. The channel complex contains alpha, beta, gamma and delta subunits in a 1:1:1:1 ratio, i.e. it contains either CACNB1 or CACNB2. N-glycosylated. As to expression, skeletal muscle.

The protein resides in the cell membrane. It localises to the sarcolemma. Its function is as follows. Regulatory subunit of the voltage-gated calcium channel that gives rise to L-type calcium currents in skeletal muscle. Regulates channel inactivation kinetics. The polypeptide is Voltage-dependent calcium channel gamma-1 subunit (CACNG1) (Homo sapiens (Human)).